Here is a 341-residue protein sequence, read N- to C-terminus: Glycerol-3-phosphate dehydrogenase [NAD(P)+] (341 aa).

Positions 12, 13, 33, and 107 each coordinate NADPH. Residues lysine 107, glycine 134, and threonine 136 each contribute to the sn-glycerol 3-phosphate site. An NADPH-binding site is contributed by alanine 138. Residues lysine 189, aspartate 242, serine 252, arginine 253, and asparagine 254 each coordinate sn-glycerol 3-phosphate. The active-site Proton acceptor is the lysine 189. Arginine 253 provides a ligand contact to NADPH. Residues valine 277 and glutamate 279 each coordinate NADPH.

It belongs to the NAD-dependent glycerol-3-phosphate dehydrogenase family.

The protein localises to the cytoplasm. The catalysed reaction is sn-glycerol 3-phosphate + NAD(+) = dihydroxyacetone phosphate + NADH + H(+). The enzyme catalyses sn-glycerol 3-phosphate + NADP(+) = dihydroxyacetone phosphate + NADPH + H(+). Its pathway is membrane lipid metabolism; glycerophospholipid metabolism. Its function is as follows. Catalyzes the reduction of the glycolytic intermediate dihydroxyacetone phosphate (DHAP) to sn-glycerol 3-phosphate (G3P), the key precursor for phospholipid synthesis. This is Glycerol-3-phosphate dehydrogenase [NAD(P)+] from Halothermothrix orenii (strain H 168 / OCM 544 / DSM 9562).